We begin with the raw amino-acid sequence, 940 residues long: MSDYKSTLNLPETEFPMRGNLANREPAMLERWNKDKLYQQIRDSRIGRKPFILHDGPPYANGSIHIGHSVNKILKDIIIKSKTLAGFDAPYVPGWDCHGLPIELKVEQKVGKPGQKISAAEFREECRKYAAAQVDGQREDFIRLGVLGDWHKPYLTMDFATEANIVRSLAKVISNGHLQKGVKPVHWCTDCGSALAEAEVEYEDKTSPAIDVGFNVVDKPALLAKFGVAQYNHDIAMVIWTTTPWTLPANRALAIAADLEYVLVSFTKEDVTRAIVVADVLHEDCVKRFGAESFEVLGRIKGSELELTRFAHPFLDFDVPVILGDHVTTDAGTGVVHTAPGHGQDDFVVGQKYGLEVANPVGDNGVYKADTPFFAGQHVFKANDNVVALLKEKGALLNHVAYRHSYPHCWRHKTPIIFRATPQWFISMDNQGLRSTALSEIQNTQWIPDWGQSRIETMVANRPDWCISRQRTWGVPITLFVNKENEELHPNSVSLMERVANRIEQHGIQAWWDLDAAELLGDEAEQYRKVTDTLDVWYDSGSTFETVVAARPEFQGHGVDLYLEGSDQHRGWFMSSLMLSTAMHAKAPYKQVLTHGFTVDGKGRKMSKSIGNVIAPQEVTNKLGADILRLWVAATDYSGEMSVSDEILNRAADSYRRIRNTGRFLLANLNGFEPEADMVAVADMVALDRWMVRRAAKVQSEIIAAYEQYNFHLVTHKLMQFCSVELGSFYLDIIKDRQYTAKRESHARRSCQSALFHIAEAMVRWIAPVLSFTADEIWQLLPGKREAYVFTQEWYEGLESITLESDLADSHWELLLSVRNEVNKELEQARRDKVLGGSLEATVTLYADTELAAKVAVLGDELRFVLLTSDAKVLPIDAAPESAVATELAGLKVLVAKTEAAKCERCWHHREDVGSVEAHPSLCGRCVTNIEGEGEARAFA.

Positions 58–68 (PYANGSIHIGH) match the 'HIGH' region motif. Glu564 contacts L-isoleucyl-5'-AMP. The short motif at 605–609 (KMSKS) is the 'KMSKS' region element. Lys608 is a binding site for ATP. Residues Cys903, Cys906, Cys923, and Cys926 each contribute to the Zn(2+) site.

Belongs to the class-I aminoacyl-tRNA synthetase family. IleS type 1 subfamily. Monomer. The cofactor is Zn(2+).

The protein localises to the cytoplasm. The enzyme catalyses tRNA(Ile) + L-isoleucine + ATP = L-isoleucyl-tRNA(Ile) + AMP + diphosphate. In terms of biological role, catalyzes the attachment of isoleucine to tRNA(Ile). As IleRS can inadvertently accommodate and process structurally similar amino acids such as valine, to avoid such errors it has two additional distinct tRNA(Ile)-dependent editing activities. One activity is designated as 'pretransfer' editing and involves the hydrolysis of activated Val-AMP. The other activity is designated 'posttransfer' editing and involves deacylation of mischarged Val-tRNA(Ile). This Shewanella amazonensis (strain ATCC BAA-1098 / SB2B) protein is Isoleucine--tRNA ligase.